The following is a 945-amino-acid chain: MSNKKADSKPQSRYPVNLLDTPFPMRGDLPKREPQWVKEWQERKVYETIRAASKGRKKFILHDGPPYANGDIHLGHAVNKILKDMIVKARNLAGFDAVYVPGWDCHGMPIEIQIEKQFGKSLPAAEVMQKARAYATEQIEKQKVGFRRLGVLGDWDNPYKTMNFTNEAGEIRALAKIMEKGYVFRGLKPVNWCFDCGSALAEAEVEYKDKTDPTIDVLFSFAEPEKTAQAFGLNALPRNEGGIVIWTTTPWTIPANQALNLHPEIVYALVDTSRGLLILAQERVEACLKQYGLEGTIVATTPGAKLVNLRFNHPLASAHPSYKRTSPVYLGDYVTTESGTGVVHSSPAYGVEDFVSCKAHGMSDSDIINPVMGDGRYIESLALFGGLSIWAANPQIVEALQGAGTLMRTENYTHSYMHCWRHKTPIIYRATSQWFAGMDVKPNDTDRTLRETALEGIENTAFYPAWGKQRLFSMIANRPDWTLSRQRQWGVPMAFFVHKETGELHPRTLELLEEVAQRVEKAGIEAWQSLDPRELLGDEANMYEKNRDTLDVWFDSGTTHWHVLRGSHKDELQFPADLYLEGSDQHRGWFHSSLLTASMLDGRPPYNALLTHGFTVDGEGRKMSKSLGNGIDPHEVANRLGAEIIRLWIASTDYSGELAISEEILKRVTEGYRRIRNTLRFLLANLSDFDFAQHARPVEDWLEIDRYAVALSANLQNDILSHYEKYEFHPVVAKLQTFCSEDLGGFYLDVLKDRLYTTAADSVARRAAQTALYHIAHGLLRLMAPFLSFTAEEAWKIFEPNSETIFTETYHAFPAVPEAGALLDKWTLLRAARSDVTKALEEARVANLIGSSLQAEVEIRASGARYDALTSLGDDLKFVLITSAASVVKVDSEAEEGVEVIASKYLKCERCWHYRADVGANAEHPTLCGRCFSNLFGNGETRSAA.

Positions P66–H76 match the 'HIGH' region motif. Residue E581 coordinates L-isoleucyl-5'-AMP. Positions K622 to S626 match the 'KMSKS' region motif. K625 lines the ATP pocket. Positions 908, 911, 928, and 931 each coordinate Zn(2+).

The protein belongs to the class-I aminoacyl-tRNA synthetase family. IleS type 1 subfamily. In terms of assembly, monomer. The cofactor is Zn(2+).

It localises to the cytoplasm. It catalyses the reaction tRNA(Ile) + L-isoleucine + ATP = L-isoleucyl-tRNA(Ile) + AMP + diphosphate. In terms of biological role, catalyzes the attachment of isoleucine to tRNA(Ile). As IleRS can inadvertently accommodate and process structurally similar amino acids such as valine, to avoid such errors it has two additional distinct tRNA(Ile)-dependent editing activities. One activity is designated as 'pretransfer' editing and involves the hydrolysis of activated Val-AMP. The other activity is designated 'posttransfer' editing and involves deacylation of mischarged Val-tRNA(Ile). In Paraburkholderia xenovorans (strain LB400), this protein is Isoleucine--tRNA ligase.